Reading from the N-terminus, the 474-residue chain is 2-succinylbenzoate--CoA ligase (474 aa).

Belongs to the ATP-dependent AMP-binding enzyme family. MenE subfamily.

It catalyses the reaction 2-succinylbenzoate + ATP + CoA = 2-succinylbenzoyl-CoA + AMP + diphosphate. It functions in the pathway quinol/quinone metabolism; 1,4-dihydroxy-2-naphthoate biosynthesis; 1,4-dihydroxy-2-naphthoate from chorismate: step 5/7. Its pathway is quinol/quinone metabolism; menaquinone biosynthesis. Converts 2-succinylbenzoate (OSB) to 2-succinylbenzoyl-CoA (OSB-CoA). This Staphylococcus epidermidis (strain ATCC 35984 / DSM 28319 / BCRC 17069 / CCUG 31568 / BM 3577 / RP62A) protein is 2-succinylbenzoate--CoA ligase.